Consider the following 535-residue polypeptide: CTP synthase (535 aa).

Residues 1–266 (MKTKFIFITG…DEQVVEKLNI (266 aa)) are amidoligase domain. Serine 14 is a CTP binding site. Serine 14 is a UTP binding site. ATP contacts are provided by residues 15-20 (SIGKGL) and aspartate 72. The Mg(2+) site is built by aspartate 72 and glutamate 140. CTP contacts are provided by residues 147-149 (DIE), 187-192 (KTKPTQ), and lysine 223. UTP-binding positions include 187–192 (KTKPTQ) and lysine 223. One can recognise a Glutamine amidotransferase type-1 domain in the interval 292-534 (RIAIVGKYVN…IGASLTHRNQ (243 aa)). L-glutamine is bound at residue glycine 354. The Nucleophile; for glutamine hydrolysis role is filled by cysteine 381. L-glutamine-binding positions include 382 to 385 (LGMQ), glutamate 405, and arginine 462. Active-site residues include histidine 507 and glutamate 509.

The protein belongs to the CTP synthase family. Homotetramer.

It carries out the reaction UTP + L-glutamine + ATP + H2O = CTP + L-glutamate + ADP + phosphate + 2 H(+). It catalyses the reaction L-glutamine + H2O = L-glutamate + NH4(+). The catalysed reaction is UTP + NH4(+) + ATP = CTP + ADP + phosphate + 2 H(+). It functions in the pathway pyrimidine metabolism; CTP biosynthesis via de novo pathway; CTP from UDP: step 2/2. Its activity is regulated as follows. Allosterically activated by GTP, when glutamine is the substrate; GTP has no effect on the reaction when ammonia is the substrate. The allosteric effector GTP functions by stabilizing the protein conformation that binds the tetrahedral intermediate(s) formed during glutamine hydrolysis. Inhibited by the product CTP, via allosteric rather than competitive inhibition. In terms of biological role, catalyzes the ATP-dependent amination of UTP to CTP with either L-glutamine or ammonia as the source of nitrogen. Regulates intracellular CTP levels through interactions with the four ribonucleotide triphosphates. This chain is CTP synthase, found in Trichlorobacter lovleyi (strain ATCC BAA-1151 / DSM 17278 / SZ) (Geobacter lovleyi).